A 136-amino-acid chain; its full sequence is Histone H3.3 (136 aa).

Residues 1–42 (MARTKQTARKSTGGKAPRKQLASKAARKSAPVSGGVKKPHRY) form a disordered region. At K5 the chain carries N6,N6,N6-trimethyllysine; alternate. K5 carries the N6,N6-dimethyllysine; alternate modification. Residues K5 and K10 each carry the N6-methyllysine; alternate modification. K10 carries the post-translational modification N6-acetyllysine; alternate. The residue at position 11 (S11) is a Phosphoserine. At K15 the chain carries N6,N6-dimethyllysine; alternate. 5 positions are modified to N6-acetyllysine; alternate: K15, K19, K24, K28, and K37. N6-methyllysine; alternate is present on residues K19, K24, K28, and K37. Residues K28 and K37 each carry the N6,N6,N6-trimethyllysine; alternate modification. N6,N6-dimethyllysine; alternate is present on residues K28 and K37. Residues K57 and K65 each carry the N6-acetyllysine modification. Position 80 is an N6,N6,N6-trimethyllysine; alternate (K80). K80 is modified (N6,N6-dimethyllysine; alternate). An N6-methyllysine; alternate modification is found at K80.

It belongs to the histone H3 family. The nucleosome is a histone octamer containing two molecules each of H2A, H2B, H3 and H4 assembled in one H3-H4 heterotetramer and two H2A-H2B heterodimers. The octamer wraps approximately 147 bp of DNA. Post-translationally, phosphorylated by IPL1 to form H3S10ph. H3S10ph promotes subsequent H3K14ac formation and is required for transcriptional activation through TBP recruitment to the promoters. In terms of processing, mono-, di- and trimethylated by the COMPASS complex to form H3K4me1/2/3. H3K4me activates gene expression by regulating transcription elongation and plays a role in telomere length maintenance. H3K4me enrichment correlates with transcription levels, and occurs in a 5' to 3' gradient with H3K4me3 enrichment at the 5'-end of genes, shifting to H3K4me2 and then H3K4me1. Methylated by SET2 to form H3K36me. H3K36me represses gene expression. Methylated by DOT1 to form H3K79me. H3K79me is required for association of SIR proteins with telomeric regions and for telomeric silencing. The COMPASS-mediated formation of H3K4me2/3 and the DOT1-mediated formation of H3K79me require H2BK123ub1. Acetylation of histone H3 leads to transcriptional activation. H3K14ac formation by GCN5 is promoted by H3S10ph. H3K14ac can also be formed by ESA1. H3K56ac formation occurs predominantly in newly synthesized H3 molecules during G1, S and G2/M of the cell cycle and may be involved in DNA repair.

It localises to the nucleus. Its subcellular location is the chromosome. In terms of biological role, core component of nucleosome. Nucleosomes wrap and compact DNA into chromatin, limiting DNA accessibility to the cellular machineries which require DNA as a template. Histones thereby play a central role in transcription regulation, DNA repair, DNA replication and chromosomal stability. DNA accessibility is regulated via a complex set of post-translational modifications of histones, also called histone code, and nucleosome remodeling. The chain is Histone H3.3 (HHT3) from Candida albicans (strain SC5314 / ATCC MYA-2876) (Yeast).